The chain runs to 161 residues: Allophycocyanin beta chain (161 aa).

Asparagine 71 carries the N4-methylasparagine modification. Residue cysteine 81 coordinates (2R,3E)-phycocyanobilin.

This sequence belongs to the phycobiliprotein family. Heterodimer of an alpha and a beta chain. Contains one covalently linked phycocyanobilin chromophore.

The protein resides in the plastid. The protein localises to the chloroplast thylakoid membrane. In terms of biological role, light-harvesting photosynthetic bile pigment-protein from the phycobiliprotein complex. Allophycocyanin has a maximum absorption at approximately 650 nanometers. The sequence is that of Allophycocyanin beta chain (apcB) from Cyanidium caldarium (Red alga).